Reading from the N-terminus, the 65-residue chain is Large ribosomal subunit protein bL35 (65 aa).

This sequence belongs to the bacterial ribosomal protein bL35 family.

The protein is Large ribosomal subunit protein bL35 of Prochlorococcus marinus (strain MIT 9301).